Here is a 652-residue protein sequence, read N- to C-terminus: Carboxypeptidase S1 homolog A (652 aa).

A signal peptide spans 1–19; the sequence is MRLAASIAVALPVIGAASA. A disulfide bridge links Cys-50 with Cys-121. Asn-77, Asn-132, Asn-161, Asn-168, Asn-184, and Asn-202 each carry an N-linked (GlcNAc...) asparagine glycan. Ser-238 is a catalytic residue. Residues Asn-260, Asn-299, Asn-347, and Asn-410 are each glycosylated (N-linked (GlcNAc...) asparagine). Cystine bridges form between Cys-325-Cys-361 and Cys-332-Cys-354. Asp-458 is an active-site residue. Position 461 (Cys-461) interacts with substrate. 3 N-linked (GlcNAc...) asparagine glycosylation sites follow: Asn-474, Asn-492, and Asn-505. His-516 is an active-site residue. Glu-517 contacts substrate. The N-linked (GlcNAc...) asparagine glycan is linked to Asn-594. The segment at 608 to 628 is disordered; sequence AASKGNPPPTTTSSPTASPTA. A compositionally biased stretch (low complexity) spans 618 to 628; it reads TTSSPTASPTA. The GPI-anchor amidated glycine moiety is linked to residue Gly-629. Positions 630-652 are cleaved as a propeptide — removed in mature form; it reads SAMLKAPVAMLAISALTVLAFYL.

The protein belongs to the peptidase S10 family.

The protein resides in the cell membrane. It carries out the reaction Preferential release of a C-terminal arginine or lysine residue.. In terms of biological role, extracellular serine carboxypeptidase that contributes to pathogenicity. The chain is Carboxypeptidase S1 homolog A (SCPA) from Arthroderma benhamiae (strain ATCC MYA-4681 / CBS 112371) (Trichophyton mentagrophytes).